A 510-amino-acid polypeptide reads, in one-letter code: Probable DNA ligase (510 aa).

An ATP-binding site is contributed by glutamate 210. The active-site N6-AMP-lysine intermediate is lysine 212. Arginine 217, arginine 232, glutamate 261, phenylalanine 296, arginine 367, and lysine 373 together coordinate ATP.

It belongs to the ATP-dependent DNA ligase family. Mg(2+) is required as a cofactor.

The enzyme catalyses ATP + (deoxyribonucleotide)n-3'-hydroxyl + 5'-phospho-(deoxyribonucleotide)m = (deoxyribonucleotide)n+m + AMP + diphosphate.. In terms of biological role, DNA ligase that seals nicks in double-stranded DNA during DNA replication, DNA recombination and DNA repair. This Saccharopolyspora erythraea (strain ATCC 11635 / DSM 40517 / JCM 4748 / NBRC 13426 / NCIMB 8594 / NRRL 2338) protein is Probable DNA ligase.